The sequence spans 260 residues: Lys-63-specific deubiquitinase BRCC36 (260 aa).

The MPN domain maps to 6–149 (VHLESDAFLV…YTCFQSVQAQ (144 aa)). 3 residues coordinate Zn(2+): histidine 92, histidine 94, and aspartate 105. Residues 92–105 (HSHPHITVWPSHVD) carry the JAMM motif motif.

It belongs to the peptidase M67A family. BRCC36 subfamily. In terms of assembly, component of the BRCA1-A complex, at least composed of brca1, bard1, uimc1/rap80, abraxas1, brcc3/brcc36, babam2 and babam1/nba1. In the BRCA1-A complex, interacts directly with abraxas1 and babam2. Component of the BRISC complex, at least composed of abraxas2, brcc3/brcc36, babam2 and babam1/nba1. Within the complex, interacts directly with abraxas2. Both the BRCA1-A complex and the BRISC complex bind polyubiquitin. Requires Zn(2+) as cofactor.

It is found in the nucleus. It localises to the cytoplasm. The protein resides in the cytoskeleton. Its subcellular location is the spindle pole. Functionally, metalloprotease that specifically cleaves 'Lys-63'-linked polyubiquitin chains. Does not have activity toward 'Lys-48'-linked polyubiquitin chains. Component of the BRCA1-A complex, a complex that specifically recognizes 'Lys-63'-linked ubiquitinated histones H2A and H2AX at DNA lesions sites, leading to target the brca1-bard1 heterodimer to sites of DNA damage at double-strand breaks (DSBs). In the BRCA1-A complex, it specifically removes 'Lys-63'-linked ubiquitin on histones H2A and H2AX, antagonizing the rnf8-dependent ubiquitination at double-strand breaks (DSBs). Catalytic subunit of the BRISC complex, a multiprotein complex that specifically cleaves 'Lys-63'-linked ubiquitin in various substrates. Mediates the specific 'Lys-63'-specific deubiquitination associated with the COP9 signalosome complex (CSN), via the interaction of the BRISC complex with the CSN complex. The BRISC complex is required for normal mitotic spindle assembly and microtubule attachment to kinetochores via its role in deubiquitinating numa1. Plays a role in interferon signaling via its role in the deubiquitination of the interferon receptor ifnar1; deubiquitination increases ifnar1 activity by enhancing its stability and cell surface expression. Acts as a regulator of the NLRP3 inflammasome by mediating deubiquitination of nlrp3. Down-regulates the response to bacterial lipopolysaccharide (LPS) via its role in ifnar1 deubiquitination. This is Lys-63-specific deubiquitinase BRCC36 (brcc3) from Salmo salar (Atlantic salmon).